The following is a 454-amino-acid chain: V-type ATP synthase subunit I 2 (454 aa).

Residues 101–121 (EREGDAPSVPRGKSSVAHDSA) are disordered. The next 4 helical transmembrane spans lie at 254 to 274 (LLFGIMFGDLGQGLLFFVLGL), 293 to 313 (VFLSVGFSSMVMGFLTGEFFA), 351 to 371 (MAFFGFTLFLGFVINSLGLII), and 424 to 444 (ACLSWVFFVKSFWSVCASVCV).

The protein belongs to the V-ATPase 116 kDa subunit family.

It localises to the cell membrane. Produces ATP from ADP in the presence of a proton gradient across the membrane. In Treponema pallidum (strain Nichols), this protein is V-type ATP synthase subunit I 2 (atpI2).